The primary structure comprises 450 residues: tRNA modification GTPase MnmE (450 aa).

(6S)-5-formyl-5,6,7,8-tetrahydrofolate-binding residues include R23, E79, and K118. Positions 214-374 constitute a TrmE-type G domain; the sequence is GITLILVGKP…LKEHILNKVG (161 aa). Residue N224 participates in K(+) binding. Residues 224–229, 243–249, and 268–271 each bind GTP; these read NAGKSS, TSIAGTT, and DTAG. S228 lines the Mg(2+) pocket. Residues T243, I245, and T248 each coordinate K(+). T249 is a binding site for Mg(2+). K450 lines the (6S)-5-formyl-5,6,7,8-tetrahydrofolate pocket.

It belongs to the TRAFAC class TrmE-Era-EngA-EngB-Septin-like GTPase superfamily. TrmE GTPase family. In terms of assembly, homodimer. Heterotetramer of two MnmE and two MnmG subunits. K(+) is required as a cofactor.

The protein resides in the cytoplasm. Functionally, exhibits a very high intrinsic GTPase hydrolysis rate. Involved in the addition of a carboxymethylaminomethyl (cmnm) group at the wobble position (U34) of certain tRNAs, forming tRNA-cmnm(5)s(2)U34. In Francisella tularensis subsp. holarctica (strain FTNF002-00 / FTA), this protein is tRNA modification GTPase MnmE.